A 388-amino-acid chain; its full sequence is MIKNPKVLILTAHYGNGHVQVAKTLEQTFRQKGIEDVIVCDLFGESHPFITDITKYLYLKSYTIGKELYRLFYYGVEKIYDKKIASWYANFGRKRLKTLLQVEKPDIVINTFPIIAVPELKKQTGISIPVYNVLTDFCVHKIWIHREVDRYFVATDHVKELMVDIGVPAEQIVETGIPIRSSFELKVNPEIIYTKYQLCKNKKILLIVAGAHGVLGNVKELCQSFMSVPNLQVVVVCGKNEALKQDLLSLQKQNSDALKVFGYVENIDELFRVTSCMITKPGGITLSEAAALQVPVILYKPVPGQENENAMYFERKGAAVVIRDDSEVFAKTEALLQDDVKLLQMKEAMKSIYLPEPAGHIVDAILAENHAEPRHIPIKSPALAQSFT.

This sequence belongs to the glycosyltransferase 28 family. UgtP subfamily.

It localises to the cell membrane. It catalyses the reaction a 1,2-diacyl-3-O-(beta-D-glucopyranosyl)-sn-glycerol + UDP-alpha-D-glucose = a 1,2-diacyl-3-O-(beta-D-Glc-(1-&gt;6)-beta-D-Glc)-sn-glycerol + UDP + H(+). The enzyme catalyses a 1,2-diacyl-3-O-(beta-D-Glc-(1-&gt;6)-beta-D-Glc)-sn-glycerol + UDP-alpha-D-glucose = a 1,2-diacyl-3-O-(beta-D-Glc-(1-&gt;6)-beta-D-Glc-(1-&gt;6)-beta-D-Glc)-sn-glycerol + UDP + H(+). The catalysed reaction is a 1,2-diacyl-sn-glycerol + UDP-alpha-D-glucose = a 1,2-diacyl-3-O-(beta-D-glucopyranosyl)-sn-glycerol + UDP + H(+). It functions in the pathway glycolipid metabolism; diglucosyl-diacylglycerol biosynthesis. Functionally, processive glucosyltransferase involved in the biosynthesis of both the bilayer- and non-bilayer-forming membrane glucolipids. Is able to successively transfer up to three glucosyl residues to diacylglycerol (DAG), thereby catalyzing the formation of beta-monoglucosyl-DAG (3-O-(beta-D-glucopyranosyl)-1,2-diacyl-sn-glycerol), beta-diglucosyl-DAG (3-O-(beta-D-glucopyranosyl-beta-(1-&gt;6)-D-glucopyranosyl)-1,2-diacyl-sn-glycerol) and beta-triglucosyl-DAG (3-O-(beta-D-glucopyranosyl-beta-(1-&gt;6)-D-glucopyranosyl-beta-(1-&gt;6)-D-glucopyranosyl)-1,2-diacyl-sn-glycerol). Beta-diglucosyl-DAG is the predominant glycolipid found in Bacillales and is also used as a membrane anchor for lipoteichoic acid (LTA). The sequence is that of Processive diacylglycerol beta-glucosyltransferase from Bacillus cereus (strain ATCC 14579 / DSM 31 / CCUG 7414 / JCM 2152 / NBRC 15305 / NCIMB 9373 / NCTC 2599 / NRRL B-3711).